The primary structure comprises 104 residues: Integration host factor subunit beta (104 aa).

Belongs to the bacterial histone-like protein family. Heterodimer of an alpha and a beta chain.

In terms of biological role, this protein is one of the two subunits of integration host factor, a specific DNA-binding protein that functions in genetic recombination as well as in transcriptional and translational control. The chain is Integration host factor subunit beta from Xylella fastidiosa (strain M23).